The chain runs to 330 residues: Inactive hydroxysteroid dehydrogenase-like protein 1 (330 aa).

An N-acetylalanine modification is found at Ala-2. The tract at residues 2–82 is required for mitochondria translocation; it reads AAVDSFYLLY…SGATDGIGKA (81 aa). NADP(+) contacts are provided by residues 74 to 80, Asp-125, and Lys-222; that span reads GATDGIG.

This sequence belongs to the short-chain dehydrogenases/reductases (SDR) family. 17-beta-HSD 3 subfamily. In terms of assembly, interacts with STYXL1.

It is found in the mitochondrion. The protein is Inactive hydroxysteroid dehydrogenase-like protein 1 (Hsdl1) of Mus musculus (Mouse).